We begin with the raw amino-acid sequence, 551 residues long: MPSRVLITSALPYANGPLHFGHIAGAYLPADVYARFRRLLGDDVLYICGSDEYGIAITLNAERAGMGYQEYVNMYHKIHKDTFDKLGISIDFFSRTTNPFHKKLVQDFYTELQSKGLIENQISLQLYSEEENRFLADRYVEGTCPKCGFDGARGDECQKCGADYEATDLVHPRSKLSGSQLVLKETEHAFLHLERMVEPLLAYIDTCYLPEHIRKFVTDYIKNLRPRAITRDLSWGIPVPDFPNKVFYVWFDAPIGYISGTMDWAASLNTPEAWKDFWLEDSTEYVQFIGKDNIPFHAAIFPAMELGQSIPYKKMDALVSSEFYLLEGCQFSKSEGNYIDIDTFLDTYSLDKLRYVLAATAPETSDSEFTFMDFKTRCNSELVGKFGNFIHRVLVFAEKNGFKELAYSANLLEDQDKQFLDRAQQIVRDAQEHYSQYSLRKACCAIMELAALGNVYFNDQAPWKLLKEGLSHRVEAVLFCACYCQKLLALISYPIIPGTAWEIWRMLSPKSLQLDSLDKDRVVDLWNRELLNFSEEVFSLTAPQLLFTIVD.

A 'HIGH' region motif is present at residues 12-22 (PYANGPLHFGH). Positions 144, 147, 157, and 160 each coordinate Zn(2+). Residues 330-334 (QFSKS) carry the 'KMSKS' region motif. Lys-333 provides a ligand contact to ATP.

Belongs to the class-I aminoacyl-tRNA synthetase family. MetG type 1 subfamily. Monomer. Zn(2+) is required as a cofactor.

It localises to the cytoplasm. The catalysed reaction is tRNA(Met) + L-methionine + ATP = L-methionyl-tRNA(Met) + AMP + diphosphate. Is required not only for elongation of protein synthesis but also for the initiation of all mRNA translation through initiator tRNA(fMet) aminoacylation. This chain is Methionine--tRNA ligase, found in Chlamydia abortus (strain DSM 27085 / S26/3) (Chlamydophila abortus).